The chain runs to 707 residues: Polyribonucleotide nucleotidyltransferase (707 aa).

Mg(2+) is bound by residues D485 and D491. Residues 552–615 (PRITVINIPK…AAIKWIKGIV (64 aa)) enclose the KH domain. The 69-residue stretch at 621 to 689 (GEIYEGKVVK…DRGKVKLSMK (69 aa)) folds into the S1 motif domain.

Belongs to the polyribonucleotide nucleotidyltransferase family. Requires Mg(2+) as cofactor.

Its subcellular location is the cytoplasm. It catalyses the reaction RNA(n+1) + phosphate = RNA(n) + a ribonucleoside 5'-diphosphate. Involved in mRNA degradation. Catalyzes the phosphorolysis of single-stranded polyribonucleotides processively in the 3'- to 5'-direction. This chain is Polyribonucleotide nucleotidyltransferase, found in Rhodospirillum centenum (strain ATCC 51521 / SW).